The chain runs to 453 residues: Trigger factor (453 aa).

Residues 171-256 enclose the PPIase FKBP-type domain; sequence GDRVTISFKG…ATVLEAPQES (86 aa).

Belongs to the FKBP-type PPIase family. Tig subfamily.

The protein resides in the cytoplasm. The enzyme catalyses [protein]-peptidylproline (omega=180) = [protein]-peptidylproline (omega=0). Involved in protein export. Acts as a chaperone by maintaining the newly synthesized protein in an open conformation. Functions as a peptidyl-prolyl cis-trans isomerase. The polypeptide is Trigger factor (Rhodopseudomonas palustris (strain BisB18)).